A 410-amino-acid chain; its full sequence is Arginine deiminase (410 aa).

Cys-400 acts as the Amidino-cysteine intermediate in catalysis.

This sequence belongs to the arginine deiminase family.

It is found in the cytoplasm. The catalysed reaction is L-arginine + H2O = L-citrulline + NH4(+). It functions in the pathway amino-acid degradation; L-arginine degradation via ADI pathway; carbamoyl phosphate from L-arginine: step 1/2. The polypeptide is Arginine deiminase (Streptococcus uberis (strain ATCC BAA-854 / 0140J)).